Consider the following 105-residue polypeptide: Guanidinium exporter (105 aa).

The helical transmembrane segment at 1 to 21 (MSWIILVIAGLLEVVWAVGLK) threads the bilayer. Residues 22–28 (YTHGFSR) lie on the Cytoplasmic side of the membrane. The chain crosses the membrane as a helical span at residues 29–49 (LTPSVITVTAMIVSMALLAWA). The Periplasmic segment spans residues 50 to 57 (MKSLPVGT). The chain crosses the membrane as a helical span at residues 58-78 (AYAVWTGIGAVGAAITGIVLL). Residues 79–81 (GES) are Cytoplasmic-facing. Residues 82 to 102 (ANPMRLASLALIVLGIIGLKL) traverse the membrane as a helical segment. At 103-105 (STH) the chain is on the periplasmic side.

It belongs to the drug/metabolite transporter (DMT) superfamily. Small multidrug resistance (SMR) (TC 2.A.7.1) family. Gdx/SugE subfamily.

Its subcellular location is the cell inner membrane. Guanidinium ion exporter. Couples guanidinium export to the proton motive force, exchanging one guanidinium ion for two protons. The polypeptide is Guanidinium exporter (Escherichia coli O157:H7).